The sequence spans 563 residues: Chaperonin GroEL 1 (563 aa).

ATP contacts are provided by residues 29-32 (TIGP), 86-90 (DGTTT), Gly413, 476-478 (NAA), and Asp492. The tract at residues 520-545 (DKPEPPSPAGGEGGGDPMGGMGGMGG) is disordered. A compositionally biased stretch (gly residues) spans 529–545 (GGEGGGDPMGGMGGMGG).

The protein belongs to the chaperonin (HSP60) family. As to quaternary structure, forms a cylinder of 14 subunits composed of two heptameric rings stacked back-to-back. Interacts with the co-chaperonin GroES.

It is found in the cytoplasm. It carries out the reaction ATP + H2O + a folded polypeptide = ADP + phosphate + an unfolded polypeptide.. In terms of biological role, together with its co-chaperonin GroES, plays an essential role in assisting protein folding. The GroEL-GroES system forms a nano-cage that allows encapsulation of the non-native substrate proteins and provides a physical environment optimized to promote and accelerate protein folding. This is Chaperonin GroEL 1 from Prochlorococcus marinus (strain SARG / CCMP1375 / SS120).